Here is a 202-residue protein sequence, read N- to C-terminus: MSIETFFQQLKHPNPNVRNQGMWGIADNYDAEVINRLMALLDEEDTTYRRAAVKTLGAIGHASVTPLVAALLNSDNMTVRSSAAKALAQVVICHPDEPLSEEGVQGLKAALQDPNPVVNIASVMAMGEIGAPVVHLLIEALQTTENPALAVSLVNAIASTGDSRGIDVLQAIINDEAADSYVRETATSAISRLEMVAGFKRN.

This is an uncharacterized protein from Pseudanabaena tenuis (strain PCC 7409).